The primary structure comprises 821 residues: Cell wall integrity transcriptional regulator CAS5 (821 aa).

Disordered regions lie at residues 42–66 (HLQSLQQQSQVQSQAPQQVQSLNQH), 219–245 (FESPQSHIQSQPSYSQGYHNQNSLSTP), 305–432 (TKSN…STSQ), 544–576 (QEEEQEHQDEQMEIDSFESNEKNARPTLSTSSL), and 607–750 (VKQE…KHKC). A compositionally biased stretch (polar residues) spans 222–245 (PQSHIQSQPSYSQGYHNQNSLSTP). A compositionally biased stretch (low complexity) spans 305–318 (TKSNSTSSYNSTLN). Over residues 319-329 (PFYTPSQQLSS) the composition is skewed to polar residues. Residues 372–387 (QLRKAKSYTSLLRKKK) show a composition bias toward basic residues. Positions 396-412 (QNQQHQQQQQQQQQQQQ) are enriched in low complexity. The segment covering 422–432 (QNLSFPNSTSQ) has biased composition (polar residues). A compositionally biased stretch (acidic residues) spans 545-561 (EEEQEHQDEQMEIDSFE). 2 stretches are compositionally biased toward low complexity: residues 662–674 (LVNKGNKTNNNDT) and 684–693 (KNTNGNGNND). Residues 694-714 (NDNDSEENNDNVDDADDDDDG) show a composition bias toward acidic residues. C2H2-type zinc fingers lie at residues 748–770 (HKCPICESRFQRPEHVKRHLKSH) and 776–801 (FECQMPNCGKRFNRKDNLKAHLKKIH). Residue Ser-769 is modified to Phosphoserine.

Phosphorylation at Ser-769 and probably additional serine residues. GLC7 dephosphorylates CAS5 in response to cell wall stress which leads to its translocation to the nucleus.

It localises to the nucleus. It is found in the cytoplasm. Its function is as follows. Transcription factor that acts with ADA2 to promote cell wall integrity. Regulates the expression of target genes in concert with the transcriptional regulators SWI4 and SWI6. Crucial for proper cell cycle dynamics and responses to echinocandins, which inhibit beta-1,3-glucan synthesis. Has distinct transcriptional targets under basal and stress conditions. Also regulates a transcriptional network that influences the response to fluconazole. Plays a key role in adherence, hyphal development, and virulence. Acts as a repressor of hypha-specific genes during yeast-form growth. The polypeptide is Cell wall integrity transcriptional regulator CAS5 (Candida albicans (strain SC5314 / ATCC MYA-2876) (Yeast)).